Reading from the N-terminus, the 122-residue chain is Large ribosomal subunit protein bL12 (122 aa).

It belongs to the bacterial ribosomal protein bL12 family. In terms of assembly, homodimer. Part of the ribosomal stalk of the 50S ribosomal subunit. Forms a multimeric L10(L12)X complex, where L10 forms an elongated spine to which 2 to 4 L12 dimers bind in a sequential fashion. Binds GTP-bound translation factors.

In terms of biological role, forms part of the ribosomal stalk which helps the ribosome interact with GTP-bound translation factors. Is thus essential for accurate translation. The protein is Large ribosomal subunit protein bL12 of Xanthomonas oryzae pv. oryzae (strain MAFF 311018).